The primary structure comprises 272 residues: ATP synthase subunit a (272 aa).

7 consecutive transmembrane segments (helical) span residues 39–59, 103–123, 124–144, 152–172, 181–201, 221–241, and 242–262; these read GFWA…LIFI, VAPL…LKWI, PVDY…KIVP, FGIS…VKGV, FTPF…IIGL, VVFI…NVPW, and AIFH…LTVV.

Belongs to the ATPase A chain family. As to quaternary structure, F-type ATPases have 2 components, CF(1) - the catalytic core - and CF(0) - the membrane proton channel. CF(1) has five subunits: alpha(3), beta(3), gamma(1), delta(1), epsilon(1). CF(0) has three main subunits: a(1), b(2) and c(9-12). The alpha and beta chains form an alternating ring which encloses part of the gamma chain. CF(1) is attached to CF(0) by a central stalk formed by the gamma and epsilon chains, while a peripheral stalk is formed by the delta and b chains.

The protein resides in the cell inner membrane. In terms of biological role, key component of the proton channel; it plays a direct role in the translocation of protons across the membrane. This Ectopseudomonas mendocina (strain ymp) (Pseudomonas mendocina) protein is ATP synthase subunit a.